Here is a 331-residue protein sequence, read N- to C-terminus: Centriolar satellite-associated tubulin polyglutamylase complex regulator 1 (331 aa).

Positions 1–111 (MLSPERLALP…HCLLQLLCPD (111 aa)) are required for interaction with PCM1. The interval 1–225 (MLSPERLALP…SCPPPALVKE (225 aa)) is required for interaction with TPGS1, LRRC49, and TTLL1. Residues 112-331 (FPLELTQKAA…STEETDESET (220 aa)) are required for interaction with TPGS2. Positions 288-331 (SPEASCLPSRTPPRVGSPWRPLHHSRKVDGESDGSTEETDESET) are disordered. Residues 318 to 331 (ESDGSTEETDESET) are compositionally biased toward acidic residues. S319 carries the phosphoserine modification.

It belongs to the CSTPP1 family. As to quaternary structure, interacts with PCM1. Interacts with TTLL1, TPGS1, TPGS2 and LRRC49; the interactions link CSTPP1 to the complex TPGC. Binds to alpha-tubulin.

The protein localises to the cytoplasm. It localises to the cytoskeleton. Its subcellular location is the microtubule organizing center. The protein resides in the centrosome. It is found in the centriolar satellite. Functionally, regulator of the tubulin polyglutamylase complex (TPGC) that controls cytoskeletal organization, nuclear shape, and cilium disassembly by balancing microtubule and actin assembly. Regulates the assembly and stability of the TPGC and thereby modulates polyglutamylation of the microtubule, which antagonizes MAP4 binding. This chain is Centriolar satellite-associated tubulin polyglutamylase complex regulator 1, found in Homo sapiens (Human).